A 442-amino-acid polypeptide reads, in one-letter code: tRNA-2-methylthio-N(6)-dimethylallyladenosine synthase (442 aa).

One can recognise an MTTase N-terminal domain in the interval 2–120 (KKVFIRTFGC…LPKMIVDKET (119 aa)). Residues cysteine 11, cysteine 49, cysteine 83, cysteine 157, cysteine 161, and cysteine 164 each contribute to the [4Fe-4S] cluster site. One can recognise a Radical SAM core domain in the interval 143–375 (RVEGGAAFVS…NEVIEAETAR (233 aa)). Residues 378–441 (QTMIGTVQRC…TFSLRGKVVE (64 aa)) enclose the TRAM domain.

This sequence belongs to the methylthiotransferase family. MiaB subfamily. As to quaternary structure, monomer. [4Fe-4S] cluster serves as cofactor.

The protein resides in the cytoplasm. The catalysed reaction is N(6)-dimethylallyladenosine(37) in tRNA + (sulfur carrier)-SH + AH2 + 2 S-adenosyl-L-methionine = 2-methylsulfanyl-N(6)-dimethylallyladenosine(37) in tRNA + (sulfur carrier)-H + 5'-deoxyadenosine + L-methionine + A + S-adenosyl-L-homocysteine + 2 H(+). Functionally, catalyzes the methylthiolation of N6-(dimethylallyl)adenosine (i(6)A), leading to the formation of 2-methylthio-N6-(dimethylallyl)adenosine (ms(2)i(6)A) at position 37 in tRNAs that read codons beginning with uridine. The sequence is that of tRNA-2-methylthio-N(6)-dimethylallyladenosine synthase from Neisseria meningitidis serogroup C (strain 053442).